We begin with the raw amino-acid sequence, 419 residues long: L-rhamnose isomerase (419 aa).

Positions 262, 294, and 296 each coordinate Mn(2+).

This sequence belongs to the rhamnose isomerase family. As to quaternary structure, homotetramer. Requires Mn(2+) as cofactor.

It localises to the cytoplasm. It catalyses the reaction L-rhamnopyranose = L-rhamnulose. It participates in carbohydrate degradation; L-rhamnose degradation; glycerone phosphate from L-rhamnose: step 1/3. In terms of biological role, catalyzes the interconversion of L-rhamnose and L-rhamnulose. This is L-rhamnose isomerase from Shigella boydii serotype 4 (strain Sb227).